The primary structure comprises 347 residues: tRNA N6-adenosine threonylcarbamoyltransferase (347 aa).

His-113 and His-117 together coordinate Fe cation. Residues 136 to 140, Asp-170, Gly-183, Asp-187, and Asn-282 contribute to the substrate site; that span reads IVSGG. Fe cation is bound at residue Asp-310.

This sequence belongs to the KAE1 / TsaD family. Fe(2+) serves as cofactor.

It localises to the cytoplasm. It carries out the reaction L-threonylcarbamoyladenylate + adenosine(37) in tRNA = N(6)-L-threonylcarbamoyladenosine(37) in tRNA + AMP + H(+). Required for the formation of a threonylcarbamoyl group on adenosine at position 37 (t(6)A37) in tRNAs that read codons beginning with adenine. Is involved in the transfer of the threonylcarbamoyl moiety of threonylcarbamoyl-AMP (TC-AMP) to the N6 group of A37, together with TsaE and TsaB. TsaD likely plays a direct catalytic role in this reaction. This Bifidobacterium adolescentis (strain ATCC 15703 / DSM 20083 / NCTC 11814 / E194a) protein is tRNA N6-adenosine threonylcarbamoyltransferase.